A 125-amino-acid chain; its full sequence is Large ribosomal subunit protein bL12 (125 aa).

This sequence belongs to the bacterial ribosomal protein bL12 family. In terms of assembly, homodimer. Part of the ribosomal stalk of the 50S ribosomal subunit. Forms a multimeric L10(L12)X complex, where L10 forms an elongated spine to which 2 to 4 L12 dimers bind in a sequential fashion. Binds GTP-bound translation factors.

Functionally, forms part of the ribosomal stalk which helps the ribosome interact with GTP-bound translation factors. Is thus essential for accurate translation. The polypeptide is Large ribosomal subunit protein bL12 (Thermus thermophilus (strain ATCC BAA-163 / DSM 7039 / HB27)).